Consider the following 480-residue polypeptide: Adenylosuccinate synthetase, chloroplastic (480 aa).

The N-terminal 54 residues, 1–54, are a transit peptide targeting the chloroplast; that stretch reads MATARVMVADRARAFGGTTATRARRDDQGRRVTIARGIPSRARVVVARASERAY. GTP-binding positions include 69 to 75 and 97 to 99; these read GDEGKGK and GHT. Residue Asp-70 is the Proton acceptor of the active site. Asp-70 and Gly-97 together coordinate Mg(2+). IMP-binding positions include 70-73, 95-98, Thr-187, Arg-201, Asn-278, Thr-293, and Arg-357; these read DEGK and NAGH. Residue His-98 is the Proton donor of the active site. 353–359 is a substrate binding site; the sequence is TTTGRPR. GTP is bound by residues Arg-359, 385 to 387, and 468 to 470; these read KLD and GVG.

Belongs to the adenylosuccinate synthetase family. In terms of assembly, homodimer. It depends on Mg(2+) as a cofactor.

The protein resides in the plastid. The protein localises to the chloroplast. It carries out the reaction IMP + L-aspartate + GTP = N(6)-(1,2-dicarboxyethyl)-AMP + GDP + phosphate + 2 H(+). The protein operates within purine metabolism; AMP biosynthesis via de novo pathway; AMP from IMP: step 1/2. Plays an important role in the de novo pathway and in the salvage pathway of purine nucleotide biosynthesis. Catalyzes the first committed step in the biosynthesis of AMP from IMP. This is Adenylosuccinate synthetase, chloroplastic from Ostreococcus tauri.